A 755-amino-acid polypeptide reads, in one-letter code: MKKQRKILWRKGIHLAFSEKWNTGFGGFKKFYFHQHLCILKAKLGRPITRNRQLRHFQGGKKALQIQKTWVKDEPPCAKTKFSVDTPHASTLSSPVKRKDTKHFVSSSRTLLRLQAEKLLSSAKNSDHEYCREKNLLKTVTDFPSNSALGQANGHRPRTDPQASDFPMKFNGESQSPGESGAIVITLSNHKRKGFCYGCCRGPEHHRNGGPLIPKQFQLNRHRRIKLSPLMMYEKLSMIRFRYRILRSQHFRTKSKVCKLRKAQRSWVQKVTGDHQETLRENGEGGSGSPFPSPEPKDPSCRQQPYFPDMDSNAVVKGTNSHVPDGHTKGSPFLGKELSLDEAFPDQQNGSATHAWDQSSCASPKWECTELIHDIPLPEHHSNTMFVSETEKEIATLGQENRTSSLSDDGVKLSVSGADTSVSSVDGPVSQKAVHSENSYQMEEDGSLKQNILSSELLDHPYCKSPLEAPLVCSGLKLENQVGGGKDSQKASPVDDEQLSVCLSGFLDEVMKKYGSLVPLSEKEVLGRLKDVFNEDFSNRKPFINREITNYRARHQKCNFRIFYNKHMLDMDDLATLDGQNWLNDQVINMYGELIMDAVPDKVHFFNSFFHRQLVTKGYNGVKRWTKKVDLFKKSLLLIPIHLEVHWSLITVTLSNRIISFYDSQGIHFKFCVENIRKYLLTEAREKNRPEFLQGWQTAVTKCIPQQKNDSDCGVFVLQYCKCLALEQPFQFSQEDMPRVRKRIYKELCECRLMD.

The interval 269–329 is disordered; sequence QKVTGDHQET…NSHVPDGHTK (61 aa). A compositionally biased stretch (basic and acidic residues) spans 272 to 283; that stretch reads TGDHQETLRENG. A protease region spans residues 563 to 724; that stretch reads FYNKHMLDMD…VFVLQYCKCL (162 aa). Residues His646, Asp663, and Cys713 contribute to the active site.

Belongs to the peptidase C48 family. Interacts with CCAR2.

Its subcellular location is the nucleus. The protein localises to the nucleolus. In terms of biological role, protease that catalyzes two essential functions in the SUMO pathway: processing of full-length SUMO3 to its mature form and deconjugation of SUMO2 and SUMO3 from targeted proteins. Has weak proteolytic activity against full-length SUMO1 or SUMO1 conjugates. Required for cell division. This Macaca fascicularis (Crab-eating macaque) protein is Sentrin-specific protease 5 (SENP5).